A 211-amino-acid polypeptide reads, in one-letter code: LexA repressor (211 aa).

A DNA-binding region (H-T-H motif) is located at residues 27 to 47 (QTEIARAFGFKGVRAVQHHLD). Catalysis depends on for autocatalytic cleavage activity residues S131 and K168.

It belongs to the peptidase S24 family. In terms of assembly, homodimer.

It catalyses the reaction Hydrolysis of Ala-|-Gly bond in repressor LexA.. Functionally, represses a number of genes involved in the response to DNA damage (SOS response), including recA and lexA. In the presence of single-stranded DNA, RecA interacts with LexA causing an autocatalytic cleavage which disrupts the DNA-binding part of LexA, leading to derepression of the SOS regulon and eventually DNA repair. This is LexA repressor from Xylella fastidiosa (strain M23).